Reading from the N-terminus, the 726-residue chain is F-box protein COS111 (726 aa).

Positions 143 to 194 constitute an F-box domain; the sequence is FADINCLPEEIICRIIANLNDADSQRNCLLVSQEWSECAKRIIYKDVKFTST. The disordered stretch occupies residues 276–295; it reads RSRTRRSSDASSMNSSVFSH. Low complexity predominate over residues 284-295; sequence DASSMNSSVFSH.

In terms of biological role, F-box protein probably involved in ubiquitin conjugation pathway. This is F-box protein COS111 (COS111) from Kluyveromyces lactis (strain ATCC 8585 / CBS 2359 / DSM 70799 / NBRC 1267 / NRRL Y-1140 / WM37) (Yeast).